Here is a 261-residue protein sequence, read N- to C-terminus: Zinc import ATP-binding protein ZnuC (261 aa).

One can recognise an ABC transporter domain in the interval 6–221; the sequence is IRLEQVGVTF…PAFVELFGKN (216 aa). 38 to 45 serves as a coordination point for ATP; that stretch reads GPNGAGKT.

The protein belongs to the ABC transporter superfamily. Zinc importer (TC 3.A.1.15.5) family. As to quaternary structure, the complex is composed of two ATP-binding proteins (ZnuC), two transmembrane proteins (ZnuB) and a solute-binding protein (ZnuA).

Its subcellular location is the cell inner membrane. The enzyme catalyses Zn(2+)(out) + ATP(in) + H2O(in) = Zn(2+)(in) + ADP(in) + phosphate(in) + H(+)(in). Part of the ABC transporter complex ZnuABC involved in zinc import. Responsible for energy coupling to the transport system. The chain is Zinc import ATP-binding protein ZnuC from Pseudomonas fluorescens (strain ATCC BAA-477 / NRRL B-23932 / Pf-5).